A 227-amino-acid chain; its full sequence is PKHD-type hydroxylase Bpro_3048 (227 aa).

Residues 78–179 (KIFTPRINRY…RLACFFWVES (102 aa)) enclose the Fe2OG dioxygenase domain. Residues His97, Asp99, and His160 each coordinate Fe cation. Arg170 contributes to the 2-oxoglutarate binding site.

Requires Fe(2+) as cofactor. It depends on L-ascorbate as a cofactor.

The polypeptide is PKHD-type hydroxylase Bpro_3048 (Polaromonas sp. (strain JS666 / ATCC BAA-500)).